The primary structure comprises 77 residues: MKLIIFTGLVLFAIVSLIEAQAENEKACLPQYQVCTDAPGNCCSNLVCDCYGRYKSGARIGRNCFCLQKGVIYKREN.

An N-terminal signal peptide occupies residues 1–20 (MKLIIFTGLVLFAIVSLIEA). Positions 21–26 (QAENEK) are excised as a propeptide.

Belongs to the neurotoxin 19 (CSTX) family. 08 (U8-Lctx) subfamily. Contains 4 disulfide bonds. Expressed by the venom gland.

It localises to the secreted. The sequence is that of U8-lycotoxin-Ls1b from Lycosa singoriensis (Wolf spider).